The sequence spans 238 residues: DNA repair protein RecO (238 aa).

Belongs to the RecO family.

Involved in DNA repair and RecF pathway recombination. The sequence is that of DNA repair protein RecO from Aliivibrio fischeri (strain ATCC 700601 / ES114) (Vibrio fischeri).